The chain runs to 297 residues: Malonyl-[acyl-carrier protein] O-methyltransferase (297 aa).

Belongs to the methyltransferase superfamily.

The enzyme catalyses malonyl-[ACP] + S-adenosyl-L-methionine = malonyl-[ACP] methyl ester + S-adenosyl-L-homocysteine. Its pathway is cofactor biosynthesis; biotin biosynthesis. In terms of biological role, converts the free carboxyl group of a malonyl-thioester to its methyl ester by transfer of a methyl group from S-adenosyl-L-methionine (SAM). It allows to synthesize pimeloyl-ACP via the fatty acid synthetic pathway. The chain is Malonyl-[acyl-carrier protein] O-methyltransferase from Laribacter hongkongensis (strain HLHK9).